A 418-amino-acid chain; its full sequence is Glutamyl-tRNA reductase (418 aa).

Substrate-binding positions include 49 to 52 (TCNR), serine 107, 112 to 114 (EPQ), and glutamine 118. The active-site Nucleophile is cysteine 50. 187-192 (GAGETI) serves as a coordination point for NADP(+).

It belongs to the glutamyl-tRNA reductase family. In terms of assembly, homodimer.

It carries out the reaction (S)-4-amino-5-oxopentanoate + tRNA(Glu) + NADP(+) = L-glutamyl-tRNA(Glu) + NADPH + H(+). It functions in the pathway porphyrin-containing compound metabolism; protoporphyrin-IX biosynthesis; 5-aminolevulinate from L-glutamyl-tRNA(Glu): step 1/2. Catalyzes the NADPH-dependent reduction of glutamyl-tRNA(Glu) to glutamate 1-semialdehyde (GSA). The protein is Glutamyl-tRNA reductase of Vibrio campbellii (strain ATCC BAA-1116).